We begin with the raw amino-acid sequence, 466 residues long: MSTEKDYVVADIGLADFGRKEITIAETEMPGLMSCRAEFGEAKPLKGARITGSLHMTIQTAVLIETLVALGAEVRWASCNIFSTQDHAAAAIAAAGVPVFAIKGESLEDYWVYTDKIFQWADGGLSNMILDDGGDATMYILLGARAEAGEDVLSNPHSEEEEILFAQIKKRLAASPGWFTKQRDAIKGVTEETTTGVNRLYQLSQKGLLPFPAINVNDSVTKSKFDNKYGCKESLVDGIRRGTDVMMAGKVAVVCGYGDVGKGSAASLSGAGARVKVTEADPICALQAAMDGYEVVLLEDVVSSADIFITTTGNKDVIRIDHMRQMKDMAIVGNIGHFDNEIEVAALRNLKWTNVKPQVDLIEFPKGNRIILLSEGRLLNLGNATGHPSFVMSASFTNQTLAQIELFTKPGQYENKVYILPKHLDEKVARLHLDKLGVKLTQLSEEQAAYIGVKPQGPFKSDHYRY.

Substrate-binding residues include Thr57, Asp132, and Glu192. Residue 193–195 (TTT) participates in NAD(+) binding. Lys222 and Asp226 together coordinate substrate. NAD(+) contacts are provided by residues Asn227, 256-261 (GYGDVG), Glu279, Asn314, 335-337 (IGH), and Asn380.

The protein belongs to the adenosylhomocysteinase family. NAD(+) is required as a cofactor.

The protein localises to the cytoplasm. It catalyses the reaction S-adenosyl-L-homocysteine + H2O = L-homocysteine + adenosine. It functions in the pathway amino-acid biosynthesis; L-homocysteine biosynthesis; L-homocysteine from S-adenosyl-L-homocysteine: step 1/1. Its function is as follows. May play a key role in the regulation of the intracellular concentration of adenosylhomocysteine. The protein is Adenosylhomocysteinase of Rhizobium etli (strain ATCC 51251 / DSM 11541 / JCM 21823 / NBRC 15573 / CFN 42).